The sequence spans 502 residues: CBL-interacting serine/threonine-protein kinase 13 (502 aa).

The segment at 32 to 51 is disordered; sequence TNKETSTPESPRSPRTPQGS. The span at 35-48 shows a compositional bias: low complexity; sequence ETSTPESPRSPRTP. A Protein kinase domain is found at 57–311; it reads YEIGKLLGHG…IPEIMKHRWF (255 aa). ATP-binding positions include 63–71 and lysine 86; that span reads LGHGSFAKV. The Proton acceptor role is filled by aspartate 179. The segment at 197–226 is activation loop; the sequence is DFGLSVVSEQLKQEGICQTFCGTPAYLAPE. Phosphoserine is present on serine 201. A Phosphothreonine modification is found at threonine 215. Residues 331 to 359 are disordered; it reads DDDNDDDDSSSLSSGRSSTASEGDAEFDI. Residues 340 to 352 show a composition bias toward low complexity; sequence SSLSSGRSSTASE. In terms of domain architecture, NAF spans 366-387; that stretch reads PRPASLNAFDILSFSDLSGLFE. Positions 390-419 are PPI; it reads GQGARFVSAAPMTKIISKLEEIAKEVKFMV.

Belongs to the protein kinase superfamily. CAMK Ser/Thr protein kinase family. SNF1 subfamily. As to quaternary structure, interacts with CBL2 and CBL3. The cofactor is Mn(2+).

It catalyses the reaction L-seryl-[protein] + ATP = O-phospho-L-seryl-[protein] + ADP + H(+). It carries out the reaction L-threonyl-[protein] + ATP = O-phospho-L-threonyl-[protein] + ADP + H(+). CIPK serine-threonine protein kinases interact with CBL proteins. Binding of a CBL protein to the regulatory NAF domain of CIPK protein lead to the activation of the kinase in a calcium-dependent manner. This chain is CBL-interacting serine/threonine-protein kinase 13 (CIPK13), found in Arabidopsis thaliana (Mouse-ear cress).